The following is a 388-amino-acid chain: Homoserine O-acetyltransferase (388 aa).

In terms of domain architecture, AB hydrolase-1 spans Pro-55–Glu-354. Ser-150 acts as the Nucleophile in catalysis. Arg-220 serves as a coordination point for substrate. Residues Asp-318 and His-348 contribute to the active site. Residue Asp-349 coordinates substrate.

It belongs to the AB hydrolase superfamily. MetX family. In terms of assembly, homodimer.

It localises to the cytoplasm. The enzyme catalyses L-homoserine + acetyl-CoA = O-acetyl-L-homoserine + CoA. It functions in the pathway amino-acid biosynthesis; L-methionine biosynthesis via de novo pathway; O-acetyl-L-homoserine from L-homoserine: step 1/1. Functionally, transfers an acetyl group from acetyl-CoA to L-homoserine, forming acetyl-L-homoserine. The chain is Homoserine O-acetyltransferase from Corynebacterium urealyticum (strain ATCC 43042 / DSM 7109).